The following is a 470-amino-acid chain: Argininosuccinate lyase (470 aa).

This sequence belongs to the lyase 1 family. Argininosuccinate lyase subfamily.

It localises to the cytoplasm. It catalyses the reaction 2-(N(omega)-L-arginino)succinate = fumarate + L-arginine. It participates in amino-acid biosynthesis; L-arginine biosynthesis; L-arginine from L-ornithine and carbamoyl phosphate: step 3/3. The polypeptide is Argininosuccinate lyase (Mycobacterium tuberculosis (strain CDC 1551 / Oshkosh)).